A 141-amino-acid chain; its full sequence is Hemoglobin subunit alpha (141 aa).

The Globin domain occupies 1 to 141; sequence VLSPADKTNV…VSTVLTSKYR (141 aa). Position 3 is a phosphoserine (Ser3). Lys7 bears the N6-succinyllysine mark. Position 8 is a phosphothreonine (Thr8). N6-succinyllysine is present on Lys11. Lys16 is modified (N6-acetyllysine; alternate). Residue Lys16 is modified to N6-succinyllysine; alternate. Residue Tyr24 is modified to Phosphotyrosine. A Phosphoserine modification is found at Ser35. Lys40 carries the N6-succinyllysine modification. The residue at position 49 (Ser49) is a Phosphoserine. His58 serves as a coordination point for O2. His87 lines the heme b pocket. Position 102 is a phosphoserine (Ser102). Thr108 carries the post-translational modification Phosphothreonine. 2 positions are modified to phosphoserine: Ser124 and Ser131. 2 positions are modified to phosphothreonine: Thr134 and Thr137. Residue Ser138 is modified to Phosphoserine.

Belongs to the globin family. In terms of assembly, heterotetramer of two alpha chains and two beta chains. Red blood cells.

In terms of biological role, involved in oxygen transport from the lung to the various peripheral tissues. Functionally, hemopressin acts as an antagonist peptide of the cannabinoid receptor CNR1. Hemopressin-binding efficiently blocks cannabinoid receptor CNR1 and subsequent signaling. This Semnopithecus entellus (Northern plains gray langur) protein is Hemoglobin subunit alpha (HBA).